The sequence spans 665 residues: Mitochondrial Rho GTPase 1 (665 aa).

Topologically, residues 1–634 (MTNDVIRIVV…NQDPEEETNT (634 aa)) are cytoplasmic. One can recognise a Miro 1 domain in the interval 3–177 (NDVIRIVVCG…FYLCQKAVMH (175 aa)). GTP contacts are provided by residues 12-19 (GDEGVGKS), 61-67 (DTQFSNS), and 119-122 (NVFD). 2 consecutive EF-hand domains span residues 193–228 (NAVA…CFGR) and 313–348 (EGYR…TPGI). Residues Asp-206, Asp-208, Asp-210, Tyr-212, Glu-217, Asp-326, Asp-328, Asp-330, and Glu-337 each coordinate Ca(2+). The Miro 2 domain occupies 452–618 (RSVFNCFVLG…FIQLAEAAQQ (167 aa)). Residues 461–468 (GSHMSGKT), 498–502 (EMTGG), and 567–570 (LKAD) contribute to the GTP site. A helical; Anchor for type IV membrane protein membrane pass occupies residues 635 to 655 (IMPFALAGGATVLLAAAVAWI). Residues 656–665 (FKNVRVAGRE) lie on the Mitochondrial intermembrane side of the membrane.

Belongs to the mitochondrial Rho GTPase family.

Its subcellular location is the mitochondrion outer membrane. In terms of biological role, mitochondrial GTPase involved in mitochondrial trafficking. Probably involved in control of anterograde transport of mitochondria and their subcellular distribution. The protein is Mitochondrial Rho GTPase 1 (GEM1) of Yarrowia lipolytica (strain CLIB 122 / E 150) (Yeast).